The sequence spans 70 residues: DNA-directed RNA polymerase subunit omega (70 aa).

It belongs to the RNA polymerase subunit omega family. The RNAP catalytic core consists of 2 alpha, 1 beta, 1 beta' and 1 omega subunit. When a sigma factor is associated with the core the holoenzyme is formed, which can initiate transcription.

It catalyses the reaction RNA(n) + a ribonucleoside 5'-triphosphate = RNA(n+1) + diphosphate. Functionally, promotes RNA polymerase assembly. Latches the N- and C-terminal regions of the beta' subunit thereby facilitating its interaction with the beta and alpha subunits. The sequence is that of DNA-directed RNA polymerase subunit omega from Staphylococcus epidermidis (strain ATCC 12228 / FDA PCI 1200).